Here is a 289-residue protein sequence, read N- to C-terminus: Early E1A protein (289 aa).

The tract at residues 41–49 (PTLHELYDL) is interaction with RB1 in competition with E2F1. The interaction with UBE2I stretch occupies residues 76–140 (EGIDLLTFPP…PSDDEDEEGE (65 aa)). The interval 82-107 (TFPPAPGSPEPPHLSRQPEQPEQRAL) is disordered. The segment covering 84-93 (PPAPGSPEPP) has biased composition (pro residues). Phosphoserine; by host is present on Ser89. A PXLXP motif, interaction with host ZMYND11 motif is present at residues 113–117 (PNLVP). Residues 122-126 (LTCHE) carry the LXCXE motif, interaction with host RB1 and TMEM173/STING motif. A zinc finger spans residues 154–174 (CRSCHYHRRNTGDPDIMCSLC). The interval 186-240 (PVSEPEPEPEPEPEPARPTRRPKMAPAILRRPTSPVSRECNSSTDSCDSGPSNTP) is disordered. Residues Ser219 and Ser231 each carry the phosphoserine; by host modification. Residues 219–237 (SPVSRECNSSTDSCDSGPS) are compositionally biased toward polar residues. The Bipartite nuclear localization signal motif lies at 258-289 (RVGGRRQAVECIEDLLNEPGQPLDLSCKRPRP). Residues 279-283 (PLDLS) carry the PXDLS motif, CTBP-binding motif.

It belongs to the adenoviridae E1A protein family. Interacts with host UBE2I; this interaction interferes with polySUMOylation. Interacts with host RB1; this interaction induces the aberrant dissociation of RB1-E2F1 complex thereby disrupting the activity of RB1 and activating E2F1-regulated genes. Interacts with host ATF7; the interaction enhances ATF7-mediated viral transactivation activity which requires the zinc binding domains of both proteins. Isoform early E1A 32 kDa protein and isoform early E1A 26 kDa protein interact (via N-terminus) with CUL1 and E3 ubiquitin ligase RBX1; these interactions inhibit RBX1-CUL1-dependent elongation reaction of ubiquitin chains and attenuate ubiquitination of SCF(FBXW7) target proteins. Interacts (via PXLXP motif) with host ZMYND11/BS69 (via MYND-type zinc finger); this interaction inhibits E1A mediated transactivation. Interacts with host EP300; this interaction stimulates the acetylation of RB1 by recruiting EP300 and RB1 into a multimeric-protein complex. Interacts with host CTBP1 and CTBP2; this interaction seems to potentiate viral replication. Interacts with host DCAF7 (ref.16). Interacts with host DYRK1A. Interacts with host KPNA4; this interaction allows E1A import into the host nucleus. Interacts with host EP400; this interaction stabilizes MYC. Interacts with host TBP protein; this interaction probably disrupts the TBP-TATA complex. Interacts (via LXCXE motif) with host TMEM173/STING; this interaction impairs the ability of TMEM173/STING to sense cytosolic DNA and promote the production of type I interferon (IFN-alpha and IFN-beta). Interacts (via C-terminus) with host ZBED1/hDREF (via C-terminus); the interaction is direct.

It is found in the host nucleus. In terms of biological role, plays a role in viral genome replication by driving entry of quiescent cells into the cell cycle. Stimulation of progression from G1 to S phase allows the virus to efficiently use the cellular DNA replicating machinery to achieve viral genome replication. E1A protein has both transforming and trans-activating activities. Induces the disassembly of the E2F1 transcription factor from RB1 by direct competition for the same binding site on RB1, with subsequent transcriptional activation of E2F1-regulated S-phase genes and of the E2 region of the adenoviral genome. Release of E2F1 leads to the ARF-mediated inhibition of MDM2 and causes TP53/p53 to accumulate because it is not targeted for degradation by MDM2-mediated ubiquitination anymore. This increase in TP53, in turn, would arrest the cell proliferation and direct its death but this effect is counteracted by the viral protein E1B-55K. Inactivation of the ability of RB1 to arrest the cell cycle is critical for cellular transformation, uncontrolled cellular growth and proliferation induced by viral infection. Interaction with RBX1 and CUL1 inhibits ubiquitination of the proteins targeted by SCF(FBXW7) ubiquitin ligase complex, and may be linked to unregulated host cell proliferation. The tumorigenesis-restraining activity of E1A may be related to the disruption of the host CtBP-CtIP complex through the CtBP binding motif. Interaction with host TMEM173/STING impairs the ability of TMEM173/STING to sense cytosolic DNA and promote the production of type I interferon (IFN-alpha and IFN-beta). Promotes the sumoylation of host ZBED1/hDREF with SUMO1. This Homo sapiens (Human) protein is Early E1A protein.